The following is a 764-amino-acid chain: 5-methyltetrahydropteroyltriglutamate--homocysteine methyltransferase (764 aa).

Residues 19-22 (RELK) and lysine 113 contribute to the 5-methyltetrahydropteroyltri-L-glutamate site. L-homocysteine contacts are provided by residues 435–437 (IGS) and glutamate 488. L-methionine contacts are provided by residues 435–437 (IGS) and glutamate 488. Residues 519–520 (RC) and tryptophan 565 contribute to the 5-methyltetrahydropteroyltri-L-glutamate site. Residue aspartate 603 coordinates L-homocysteine. Aspartate 603 provides a ligand contact to L-methionine. Glutamate 609 contacts 5-methyltetrahydropteroyltri-L-glutamate. Positions 645, 647, and 669 each coordinate Zn(2+). The active-site Proton donor is histidine 698. Cysteine 730 provides a ligand contact to Zn(2+).

Belongs to the vitamin-B12 independent methionine synthase family. Zn(2+) serves as cofactor.

The enzyme catalyses 5-methyltetrahydropteroyltri-L-glutamate + L-homocysteine = tetrahydropteroyltri-L-glutamate + L-methionine. It participates in amino-acid biosynthesis; L-methionine biosynthesis via de novo pathway; L-methionine from L-homocysteine (MetE route): step 1/1. Functionally, catalyzes the transfer of a methyl group from 5-methyltetrahydrofolate to homocysteine resulting in methionine formation. This chain is 5-methyltetrahydropteroyltriglutamate--homocysteine methyltransferase, found in Desulforamulus reducens (strain ATCC BAA-1160 / DSM 100696 / MI-1) (Desulfotomaculum reducens).